The chain runs to 856 residues: MASADKNGGSVSSVSSSRLQSRKPPNLSITIPPPEKETQAPGEQDSMLPEGFQNRRLKKSQPRTWAAHTTACPPSFLPKRKNPAYLKSVSLQEPRSRWQESSEKRPGFRRQASLSQSIRKGAAQWFGVSGDWEGQRQQWQRRSLHHCSMRYGRLKASCQRDLELPSQEAPSFQGTESPKPCKMPKIVDPLARGRAFRHPEEMDRPHAPHPPLTPGVLSLTSFTSVRSGYSHLPRRKRMSVAHMSLQAAAALLKGRSVLDATGQRCRVVKRSFAFPSFLEEDVVDGADTFDSSFFSKEEMSSMPDDVFESPPLSASYFRGIPHSASPVSPDGVQIPLKEYGRAPVPGPRRGKRIASKVKHFAFDRKKRHYGLGVVGNWLNRSYRRSISSTVQRQLESFDSHRPYFTYWLTFVHVIITLLVICTYGIAPVGFAQHVTTQLVLRNKGVYESVKYIQQENFWVGPSSIDLIHLGAKFSPCIRKDGQIEQLVLRERDLERDSGCCVQNDHSGCIQTQRKDCSETLATFVKWQDDTGPPMDKSDLGQKRTSGAVCHQDPRTCEEPASSGAHIWPDDITKWPICTEQARSNHTGFLHMDCEIKGRPCCIGTKGSCEITTREYCEFMHGYFHEEATLCSQVHCLDKVCGLLPFLNPEVPDQFYRLWLSLFLHAGVVHCLVSVVFQMTILRDLEKLAGWHRIAIIFILSGITGNLASAIFLPYRAEVGPAGSQFGLLACLFVELFQSWPLLERPWKAFLNLSAIVLFLFICGLLPWIDNIAHIFGFLSGLLLAFAFLPYITFGTSDKYRKRALILVSLLAFAGLFAALVLWLYIYPINWPWIEHLTCFPFTSRFCEKYELDQVLH.

A disordered region spans residues 1 to 115; that stretch reads MASADKNGGS…PGFRRQASLS (115 aa). Residues 1–409 lie on the Cytoplasmic side of the membrane; it reads MASADKNGGS…HRPYFTYWLT (409 aa). Serine 90 bears the Phosphoserine mark. The span at 94–106 shows a compositional bias: basic and acidic residues; that stretch reads PRSRWQESSEKRP. Serine 113 and serine 117 each carry phosphoserine. The tract at residues 165-184 is disordered; it reads PSQEAPSFQGTESPKPCKMP. The involved in interaction with FRMD8 stretch occupies residues 191 to 271; the sequence is ARGRAFRHPE…GQRCRVVKRS (81 aa). Phosphoserine is present on residues serine 323, serine 325, and serine 328. A helical transmembrane segment spans residues 410–430; the sequence is FVHVIITLLVICTYGIAPVGF. Residues 431-660 are Lumenal-facing; sequence AQHVTTQLVL…PDQFYRLWLS (230 aa). A disordered region spans residues 531-553; sequence GPPMDKSDLGQKRTSGAVCHQDP. Residues 661 to 681 traverse the membrane as a helical segment; the sequence is LFLHAGVVHCLVSVVFQMTIL. The Cytoplasmic portion of the chain corresponds to 682-692; the sequence is RDLEKLAGWHR. The chain crosses the membrane as a helical span at residues 693–713; sequence IAIIFILSGITGNLASAIFLP. The Lumenal portion of the chain corresponds to 714–715; the sequence is YR. The helical transmembrane segment at 716–736 threads the bilayer; sequence AEVGPAGSQFGLLACLFVELF. Over 737 to 747 the chain is Cytoplasmic; the sequence is QSWPLLERPWK. A helical transmembrane segment spans residues 748–768; that stretch reads AFLNLSAIVLFLFICGLLPWI. At 769–773 the chain is on the lumenal side; that stretch reads DNIAH. A helical transmembrane segment spans residues 774–794; the sequence is IFGFLSGLLLAFAFLPYITFG. The Cytoplasmic segment spans residues 795–802; sequence TSDKYRKR. Residues 803-823 form a helical membrane-spanning segment; the sequence is ALILVSLLAFAGLFAALVLWL. The Lumenal portion of the chain corresponds to 824-856; it reads YIYPINWPWIEHLTCFPFTSRFCEKYELDQVLH.

It belongs to the peptidase S54 family. In terms of assembly, interacts with EGF. Interacts (via cytoplasmic N-terminus) with FRMD8/iTAP; this interaction leads to mutual protein stabilization. Interacts with ADAM17/TACE. In terms of tissue distribution, found in the epidermis and esophageal epithelium.

Its subcellular location is the endoplasmic reticulum membrane. The protein localises to the cell membrane. Regulates ADAM17 protease, a sheddase of the epidermal growth factor (EGF) receptor ligands and TNF, thereby plays a role in sleep, cell survival, proliferation, migration and inflammation. Does not exhibit any protease activity on its own. The chain is Inactive rhomboid protein 2 (RHBDF2) from Homo sapiens (Human).